A 706-amino-acid polypeptide reads, in one-letter code: K(+)-insensitive pyrophosphate-energized proton pump (706 aa).

A run of 5 helical transmembrane segments spans residues methionine 1 to alanine 21, valine 62 to isoleucine 82, glycine 83 to valine 103, leucine 129 to phenylalanine 149, and valine 164 to phenylalanine 184. Residue lysine 186 participates in substrate binding. Mg(2+) contacts are provided by aspartate 189, aspartate 193, asparagine 216, and aspartate 219. A run of 6 helical transmembrane segments spans residues leucine 231–glycine 251, threonine 263–valine 283, isoleucine 300–phenylalanine 320, glycine 330–isoleucine 350, isoleucine 393–isoleucine 413, and alanine 414–valine 434. Position 436 (aspartate 436) interacts with Mg(2+). A run of 4 helical transmembrane segments spans residues alanine 467–alanine 487, tyrosine 516–methionine 536, isoleucine 585–isoleucine 605, and alanine 616–isoleucine 636. Residues aspartate 646, aspartate 672, and aspartate 676 each coordinate Ca(2+). Residue lysine 679 coordinates substrate. Residues alanine 685–alanine 705 form a helical membrane-spanning segment.

It belongs to the H(+)-translocating pyrophosphatase (TC 3.A.10) family. K(+)-insensitive subfamily. Homodimer. Requires Mg(2+) as cofactor.

It localises to the cell inner membrane. The catalysed reaction is diphosphate + H2O + H(+)(in) = 2 phosphate + 2 H(+)(out). Functionally, proton pump that utilizes the energy of pyrophosphate hydrolysis as the driving force for proton movement across the membrane. Generates a proton motive force. In Rhodopseudomonas palustris (strain ATCC BAA-98 / CGA009), this protein is K(+)-insensitive pyrophosphate-energized proton pump.